Consider the following 148-residue polypeptide: Azurin (148 aa).

The signal sequence occupies residues 1–20; that stretch reads MLRKLAAVSLLSLLSAPLLA. Positions 21-148 constitute a Plastocyanin-like domain; sequence AECSVDIQGN…ALMKGTLTLK (128 aa). Cysteines 23 and 46 form a disulfide. Histidine 66, cysteine 132, histidine 137, and methionine 141 together coordinate Cu cation.

The protein localises to the periplasm. In terms of biological role, transfers electrons from cytochrome c551 to cytochrome oxidase. This is Azurin (azu) from Pseudomonas aeruginosa (strain ATCC 15692 / DSM 22644 / CIP 104116 / JCM 14847 / LMG 12228 / 1C / PRS 101 / PAO1).